The primary structure comprises 598 residues: NADH-quinone oxidoreductase subunit C/D (598 aa).

Residues 1-189 (MTDQIAQNSA…DPYVLTKQKE (189 aa)) form an NADH dehydrogenase I subunit C region. The tract at residues 213-598 (DFMFLNLGPN…IDFVMSDVDR (386 aa)) is NADH dehydrogenase I subunit D.

In the N-terminal section; belongs to the complex I 30 kDa subunit family. The protein in the C-terminal section; belongs to the complex I 49 kDa subunit family. NDH-1 is composed of 13 different subunits. Subunits NuoB, CD, E, F, and G constitute the peripheral sector of the complex.

The protein resides in the cell inner membrane. It carries out the reaction a quinone + NADH + 5 H(+)(in) = a quinol + NAD(+) + 4 H(+)(out). Its function is as follows. NDH-1 shuttles electrons from NADH, via FMN and iron-sulfur (Fe-S) centers, to quinones in the respiratory chain. The immediate electron acceptor for the enzyme in this species is believed to be ubiquinone. Couples the redox reaction to proton translocation (for every two electrons transferred, four hydrogen ions are translocated across the cytoplasmic membrane), and thus conserves the redox energy in a proton gradient. The chain is NADH-quinone oxidoreductase subunit C/D from Proteus mirabilis (strain HI4320).